A 278-amino-acid polypeptide reads, in one-letter code: Putative glycosyltransferase EpsE (278 aa).

It belongs to the glycosyltransferase 2 family.

Its function is as follows. May be involved in the production of the exopolysaccharide (EPS) component of the extracellular matrix during biofilm formation. EPS is responsible for the adhesion of chains of cells into bundles. Required for biofilm maintenance. This chain is Putative glycosyltransferase EpsE (epsE), found in Bacillus subtilis (strain 168).